Here is an 874-residue protein sequence, read N- to C-terminus: Cellulose synthase catalytic subunit [UDP-forming] (874 aa).

4 helical membrane passes run 30–50 (SPFS…VFPL), 151–171 (ILGV…TQPF), 173–193 (PLSQ…VRRM), and 230–250 (LVCG…LVLG). A catalytic subdomain A region spans residues 271 to 364 (QWPTVDIFVP…FVAIFDCDHV (94 aa)). Residue aspartate 313 is part of the active site. Substrate is bound by residues aspartate 360 and aspartate 362. The catalytic subdomain B stretch occupies residues 441–501 (KPLDEIGGIA…GQRIRWARGM (61 aa)). Aspartate 457 is an active-site residue. The next 5 membrane-spanning stretches (helical) occupy residues 525-545 (LNAM…TAPL), 547-567 (FLLL…LFVI), 592-612 (IYET…LINP), 634-654 (VISR…AAGV), and 668-688 (VIVS…AVAV). Positions 694 to 790 (QVRRAHRVEI…QHIDFVQCTF (97 aa)) constitute a PilZ domain. A helical membrane pass occupies residues 833–853 (SVKVIFRSLTALIAWIVSFIP).

The protein belongs to the glycosyltransferase 2 family. Mg(2+) is required as a cofactor.

The protein resides in the cell inner membrane. The catalysed reaction is [(1-&gt;4)-beta-D-glucosyl](n) + UDP-alpha-D-glucose = [(1-&gt;4)-beta-D-glucosyl](n+1) + UDP + H(+). Its pathway is glycan metabolism; bacterial cellulose biosynthesis. Activated by bis-(3'-5') cyclic diguanylic acid (c-di-GMP). Its function is as follows. Catalytic subunit of cellulose synthase. It polymerizes uridine 5'-diphosphate glucose to cellulose, which is produced as an extracellular component for mechanical and chemical protection at the onset of the stationary phase, when the cells exhibit multicellular behavior (rdar morphotype). Coexpression of cellulose and thin aggregative fimbriae leads to a hydrophobic network with tightly packed cells embedded in a highly inert matrix. The chain is Cellulose synthase catalytic subunit [UDP-forming] (bcsA) from Salmonella typhi.